Here is a 55-residue protein sequence, read N- to C-terminus: Large ribosomal subunit protein bL33 (55 aa).

The protein belongs to the bacterial ribosomal protein bL33 family.

This Agrobacterium fabrum (strain C58 / ATCC 33970) (Agrobacterium tumefaciens (strain C58)) protein is Large ribosomal subunit protein bL33.